We begin with the raw amino-acid sequence, 267 residues long: Tryptophan synthase alpha chain (267 aa).

Catalysis depends on proton acceptor residues E49 and D60.

It belongs to the TrpA family. In terms of assembly, tetramer of two alpha and two beta chains.

The enzyme catalyses (1S,2R)-1-C-(indol-3-yl)glycerol 3-phosphate + L-serine = D-glyceraldehyde 3-phosphate + L-tryptophan + H2O. It functions in the pathway amino-acid biosynthesis; L-tryptophan biosynthesis; L-tryptophan from chorismate: step 5/5. Functionally, the alpha subunit is responsible for the aldol cleavage of indoleglycerol phosphate to indole and glyceraldehyde 3-phosphate. This Methylococcus capsulatus (strain ATCC 33009 / NCIMB 11132 / Bath) protein is Tryptophan synthase alpha chain.